The sequence spans 821 residues: Kinetochore protein SLK19 (821 aa).

Disordered stretches follow at residues 1–52 (MNEV…SQFV) and 99–153 (FDDK…NDKE). At threonine 7 the chain carries Phosphothreonine; by CDC28. Positions 15-51 (QAQQREQNSENCSQERNPRTFNSEPDSSFNSPGSSQF) are enriched in polar residues. Basic and acidic residues-rich tracts occupy residues 99–122 (FDDK…DKHV) and 136–153 (SSEK…NDKE). Phosphoserine is present on residues serine 188 and serine 189. Serine 201 is subject to Phosphoserine; by CDC28. Position 216 is a phosphoserine (serine 216). A Phosphothreonine modification is found at threonine 273. Disordered stretches follow at residues 274–298 (PLYE…DDNQ) and 699–720 (EQNN…RDDE). A Phosphoserine modification is found at serine 283. Positions 310 to 821 (AKRNEELTDQ…LLKLLENEKK (512 aa)) form a coiled coil.

In terms of processing, cleaved by ESP1 at the onset of anaphase. Post-translationally, phosphorylated by CDC5/Polo-like kinase at the onset of anaphase. Phosphorylation takes places at proximity to cleavage sites and is required for an efficient cleavage by ESP1. Phosphorylated also by CDC28.

It is found in the chromosome. It localises to the centromere. Its subcellular location is the kinetochore. The protein localises to the cytoplasm. The protein resides in the cytoskeleton. It is found in the microtubule organizing center. It localises to the spindle pole body. Has a role in spindle assembly and stability. Required to ensure a timely exit form mitosis. Essential to maintain pre-anaphase spindle polarity. Associates to the plus ends of the microtubules at the kinetochore and spindle midzone. A component of the FEAR (CDC14 Early Anaphase Release) network which promotes CDC14 release from the nucleolus during early anaphase. Required for proper chromosome segregation during meiosis I where it prevents premature sister chromatid separation. The sequence is that of Kinetochore protein SLK19 (SLK19) from Saccharomyces cerevisiae (strain ATCC 204508 / S288c) (Baker's yeast).